A 382-amino-acid polypeptide reads, in one-letter code: Guanine nucleotide-binding protein G(s) subunit alpha (382 aa).

Residues 1–14 are compositionally biased toward polar residues; that stretch reads MGCFGSPTSKQSDV. The tract at residues 1 to 31 is disordered; the sequence is MGCFGSPTSKQSDVNSEDSKSQKRRSDAISR. Glycine 2 carries N-palmitoyl glycine lipidation. Cysteine 3 carries the S-palmitoyl cysteine lipid modification. Residues 17 to 31 show a composition bias toward basic and acidic residues; sequence EDSKSQKRRSDAISR. A G-alpha domain is found at 42-382; the sequence is ATHRLLLLGA…RMHLRQYELL (341 aa). Residues 45–58 form a G1 motif region; it reads RLLLLGAGESGKST. Residues 50–57, 51–58, 186–192, 211–215, 212–216, 280–283, 281–284, and alanine 354 contribute to the GTP site; these read GAGESGKS, AGESGKST, LRCRVLT, DVGGQ, VGGQR, NKQD, and KQDL. Residues serine 57 and threonine 192 each coordinate Mg(2+). Residues 184-192 are G2 motif; the sequence is DILRCRVLT. Residues 207–216 form a G3 motif region; sequence FHMFDVGGQR. A G4 motif region spans residues 276–283; sequence ILFLNKQD. Residues 352 to 357 form a G5 motif region; it reads TCAVDT.

The protein belongs to the G-alpha family. G(s) subfamily. As to quaternary structure, g proteins are composed of 3 units; alpha, beta and gamma. The alpha chain contains the guanine nucleotide binding site.

Guanine nucleotide-binding proteins (G proteins) are involved as modulators or transducers in various transmembrane signaling systems. The G(s) protein is involved in hormonal regulation of adenylate cyclase: it activates the cyclase. This is Guanine nucleotide-binding protein G(s) subunit alpha (G-salpha60A) from Drosophila pseudoobscura pseudoobscura (Fruit fly).